The sequence spans 589 residues: Serine/threonine-protein kinase STE7 homolog (589 aa).

Basic and acidic residues predominate over residues 1–18 (MTRTTRIDTQEATKHKDL). Disordered stretches follow at residues 1-162 (MTRT…DPDN) and 185-233 (RQHY…ASSQ). Residues 24–33 (PLSLSSNPNP) show a composition bias toward low complexity. Positions 57-69 (VKSTSGSLRSSDM) are enriched in polar residues. Low complexity predominate over residues 92–121 (PTASSSATSTPTSNITGSSSASSIQFAQKS). Composition is skewed to polar residues over residues 127–136 (IVSQTLSRPS) and 144–162 (SGYSSLNVNQSNRNVDPDN). Basic residues predominate over residues 185–203 (RQHYQNSHHHLPTTNRKRQ). The segment covering 206–220 (ISSISPTKSSAASSS) has biased composition (low complexity). Polar residues predominate over residues 221-233 (LEPQIQSLPASSQ). Residues 249 to 565 (LLTLKQLGSG…QLLEDKEHFF (317 aa)) enclose the Protein kinase domain. ATP is bound by residues 255-263 (LGSGNSGSV) and lysine 278. The Proton acceptor role is filled by aspartate 374. The residue at position 402 (serine 402) is a Phosphoserine. Position 408 is a phosphothreonine (threonine 408). Residues 473 to 499 (IAAERNGQNSPSRSRKNKQKGNGYNSY) form a disordered region.

It belongs to the protein kinase superfamily. STE Ser/Thr protein kinase family. MAP kinase kinase subfamily.

It catalyses the reaction L-seryl-[protein] + ATP = O-phospho-L-seryl-[protein] + ADP + H(+). It carries out the reaction L-threonyl-[protein] + ATP = O-phospho-L-threonyl-[protein] + ADP + H(+). The catalysed reaction is L-tyrosyl-[protein] + ATP = O-phospho-L-tyrosyl-[protein] + ADP + H(+). The polypeptide is Serine/threonine-protein kinase STE7 homolog (HST7) (Candida albicans (strain SC5314 / ATCC MYA-2876) (Yeast)).